Here is a 200-residue protein sequence, read N- to C-terminus: Peroxiredoxin (200 aa).

In terms of domain architecture, Thioredoxin spans 6–165; that stretch reads AQIGKPAPEF…TLRLVQAFQH (160 aa). The active-site Cysteine sulfenic acid (-SOH) intermediate is the Cys52.

It belongs to the peroxiredoxin family. AhpC/Prx1 subfamily. As to quaternary structure, homodimer; disulfide-linked, upon oxidation.

It carries out the reaction a hydroperoxide + [thioredoxin]-dithiol = an alcohol + [thioredoxin]-disulfide + H2O. Thiol-specific peroxidase that catalyzes the reduction of hydrogen peroxide and organic hydroperoxides to water and alcohols, respectively. Plays a role in cell protection against oxidative stress by detoxifying peroxides and as sensor of hydrogen peroxide-mediated signaling events. This chain is Peroxiredoxin, found in Cynops pyrrhogaster (Japanese fire-bellied newt).